The chain runs to 990 residues: DNA polymerase (990 aa).

The disordered stretch occupies residues 936 to 976 (PSDDAARKRARAGPSALRKQKAASNDEDSSDEDDEDCSQAI). Acidic residues predominate over residues 960–972 (NDEDSSDEDDEDC).

This sequence belongs to the DNA polymerase type-B family.

The enzyme catalyses DNA(n) + a 2'-deoxyribonucleoside 5'-triphosphate = DNA(n+1) + diphosphate. Replicates the viral genome, host DNA polymerases cannot substitute for the viral enzyme in this process. This chain is DNA polymerase (POL), found in Choristoneura fumiferana (Spruce budworm moth).